The chain runs to 72 residues: MNNSNNLDYFTLYIIFSIAFMLITLLVILIAKPSTGLGEVLVTINLLNALVWLAINLVNRLRERLVNHRDQQ.

The Cytoplasmic segment spans residues 1–9 (MNNSNNLDY). The helical transmembrane segment at 10–30 (FTLYIIFSIAFMLITLLVILI) threads the bilayer. Residues 31–34 (AKPS) lie on the Periplasmic side of the membrane. A helical transmembrane segment spans residues 35–55 (TGLGEVLVTINLLNALVWLAI). Residues 56–72 (NLVNRLRERLVNHRDQQ) lie on the Cytoplasmic side of the membrane.

Interacts with FtsL, FtsQ, FtsI, FtsN, and probably many other cell division proteins.

It localises to the cell inner membrane. In terms of biological role, could be involved in cell division. May participate in the stabilization of the cell divisome under specific conditions. This chain is Inner membrane protein YmgF (ymgF), found in Escherichia coli (strain K12).